Reading from the N-terminus, the 313-residue chain is Olfactory receptor 8B2 (313 aa).

Topologically, residues 1–25 (MLARNNSLVTEFILAGLTDHPEFRQ) are extracellular. N5 is a glycosylation site (N-linked (GlcNAc...) asparagine). Residues 26-46 (PLFFLFLVIYIVTMVGNLGLI) traverse the membrane as a helical segment. Residues 47–54 (TLFGLNSH) lie on the Cytoplasmic side of the membrane. Residues 55 to 75 (LHTPMYYFLFNLSFIDLCYSS) form a helical membrane-spanning segment. The Extracellular segment spans residues 76 to 99 (VFTPKMLMNFVSKKNIISNVGCMT). A disulfide bridge connects residues C97 and C189. Residues 100 to 120 (RLFFFLFFVISECYMLTSMAY) traverse the membrane as a helical segment. Over 121 to 139 (DRYVAICNPLLYKVTMSHQ) the chain is Cytoplasmic. A helical membrane pass occupies residues 140–160 (VCSMLTFAAYIMGLAGATAHT). The Extracellular portion of the chain corresponds to 161–197 (GCMLRLTFCSANIINHYLCDILPLLQLSCTSTYVNEV). A helical transmembrane segment spans residues 198-217 (VVLIVVGTNITVPSCTILIS). Residues 218-237 (YVFIVTSILHIKSTQGRSKA) lie on the Cytoplasmic side of the membrane. The chain crosses the membrane as a helical span at residues 238–258 (FSTCSSHVIALSLFFGSAAFM). At 259-270 (YIKYSSGSMEQG) the chain is on the extracellular side. A helical membrane pass occupies residues 271–291 (KVSSVFYTNVVPMLNPLIYSL). Topologically, residues 292–313 (RNKDVKVALRKALIKIQRRNIF) are cytoplasmic.

This sequence belongs to the G-protein coupled receptor 1 family.

It is found in the cell membrane. Odorant receptor. The chain is Olfactory receptor 8B2 (OR8B2) from Homo sapiens (Human).